The sequence spans 694 residues: Follicle-stimulating hormone receptor (694 aa).

The N-terminal stretch at methionine 1–glycine 17 is a signal peptide. Cystine bridges form between cysteine 18–cysteine 25 and cysteine 23–cysteine 32. An LRRNT domain is found at cysteine 18 to arginine 46. Residues cysteine 18–arginine 367 lie on the Extracellular side of the membrane. LRR repeat units follow at residues valine 49–leucine 72, glutamate 73–leucine 97, histidine 98–asparagine 118, leucine 119–serine 143, histidine 144–serine 169, serine 170–glycine 192, threonine 193–glycine 216, alanine 217–asparagine 240, and leucine 241–aspartate 259. N-linked (GlcNAc...) asparagine glycosylation is found at asparagine 191 and asparagine 199. Residue asparagine 268 is glycosylated (N-linked (GlcNAc...) asparagine). 4 cysteine pairs are disulfide-bonded: cysteine 275/cysteine 347, cysteine 276/cysteine 292, cysteine 276/cysteine 357, and cysteine 292/cysteine 339. An N-linked (GlcNAc...) asparagine glycan is attached at asparagine 293. Tyrosine 336 bears the Sulfotyrosine mark. Residues valine 368 to leucine 388 form a helical membrane-spanning segment. Residues isoleucine 389 to arginine 399 lie on the Cytoplasmic side of the membrane. A helical transmembrane segment spans residues phenylalanine 400–valine 422. At aspartate 423 to aspartate 444 the chain is on the extracellular side. Cysteine 443 and cysteine 518 are disulfide-bonded. Residues alanine 445 to leucine 466 form a helical membrane-spanning segment. The Cytoplasmic segment spans residues glutamate 467–histidine 486. A helical membrane pass occupies residues alanine 487–valine 509. The Extracellular segment spans residues serine 510–glutamine 529. Residues phenylalanine 530–threonine 551 form a helical membrane-spanning segment. Topologically, residues histidine 552–arginine 574 are cytoplasmic. The helical transmembrane segment at methionine 575–valine 598 threads the bilayer. Residues lysine 599–lysine 609 lie on the Extracellular side of the membrane. Residues isoleucine 610–threonine 631 traverse the membrane as a helical segment. Topologically, residues lysine 632 to serine 694 are cytoplasmic.

Belongs to the G-protein coupled receptor 1 family. FSH/LSH/TSH subfamily. Homotrimer. Functions as a homotrimer binding the FSH hormone heterodimer composed of CGA and FSHB. Interacts with ARRB2. Interacts with APPL2; interaction is independent of follicle stimulating hormone stimulation. In terms of processing, N-glycosylated; indirectly required for FSH-binding, possibly via a conformational change that allows high affinity binding of hormone. Sulfated.

It is found in the cell membrane. G protein-coupled receptor for follitropin, the follicle-stimulating hormone. Through cAMP production activates the downstream PI3K-AKT and ERK1/ERK2 signaling pathways. This chain is Follicle-stimulating hormone receptor (FSHR), found in Notamacropus eugenii (Tammar wallaby).